The primary structure comprises 332 residues: 4-hydroxy-3-methylbut-2-enyl diphosphate reductase (332 aa).

Residue Cys13 coordinates [4Fe-4S] cluster. (2E)-4-hydroxy-3-methylbut-2-enyl diphosphate-binding residues include His41 and His75. Dimethylallyl diphosphate-binding residues include His41 and His75. Isopentenyl diphosphate contacts are provided by His41 and His75. Position 97 (Cys97) interacts with [4Fe-4S] cluster. His125 is a (2E)-4-hydroxy-3-methylbut-2-enyl diphosphate binding site. A dimethylallyl diphosphate-binding site is contributed by His125. His125 provides a ligand contact to isopentenyl diphosphate. Glu127 (proton donor) is an active-site residue. Residue Thr168 participates in (2E)-4-hydroxy-3-methylbut-2-enyl diphosphate binding. Cys229 lines the [4Fe-4S] cluster pocket. Residues Ser257, Ser258, Asn259, and Ser306 each coordinate (2E)-4-hydroxy-3-methylbut-2-enyl diphosphate. Dimethylallyl diphosphate-binding residues include Ser257, Ser258, Asn259, and Ser306. Positions 257, 258, 259, and 306 each coordinate isopentenyl diphosphate.

The protein belongs to the IspH family. [4Fe-4S] cluster serves as cofactor.

It catalyses the reaction isopentenyl diphosphate + 2 oxidized [2Fe-2S]-[ferredoxin] + H2O = (2E)-4-hydroxy-3-methylbut-2-enyl diphosphate + 2 reduced [2Fe-2S]-[ferredoxin] + 2 H(+). The enzyme catalyses dimethylallyl diphosphate + 2 oxidized [2Fe-2S]-[ferredoxin] + H2O = (2E)-4-hydroxy-3-methylbut-2-enyl diphosphate + 2 reduced [2Fe-2S]-[ferredoxin] + 2 H(+). It functions in the pathway isoprenoid biosynthesis; dimethylallyl diphosphate biosynthesis; dimethylallyl diphosphate from (2E)-4-hydroxy-3-methylbutenyl diphosphate: step 1/1. It participates in isoprenoid biosynthesis; isopentenyl diphosphate biosynthesis via DXP pathway; isopentenyl diphosphate from 1-deoxy-D-xylulose 5-phosphate: step 6/6. Its function is as follows. Catalyzes the conversion of 1-hydroxy-2-methyl-2-(E)-butenyl 4-diphosphate (HMBPP) into a mixture of isopentenyl diphosphate (IPP) and dimethylallyl diphosphate (DMAPP). Acts in the terminal step of the DOXP/MEP pathway for isoprenoid precursor biosynthesis. This Chlorobaculum tepidum (strain ATCC 49652 / DSM 12025 / NBRC 103806 / TLS) (Chlorobium tepidum) protein is 4-hydroxy-3-methylbut-2-enyl diphosphate reductase.